Reading from the N-terminus, the 316-residue chain is Beta-ketoacyl-[acyl-carrier-protein] synthase III (316 aa).

Residues Cys-112 and His-243 contribute to the active site. The interval 244-248 (QANLR) is ACP-binding. Asn-273 is an active-site residue.

The protein belongs to the thiolase-like superfamily. FabH family. In terms of assembly, homodimer.

The protein resides in the cytoplasm. It carries out the reaction malonyl-[ACP] + acetyl-CoA + H(+) = 3-oxobutanoyl-[ACP] + CO2 + CoA. The protein operates within lipid metabolism; fatty acid biosynthesis. In terms of biological role, catalyzes the condensation reaction of fatty acid synthesis by the addition to an acyl acceptor of two carbons from malonyl-ACP. Catalyzes the first condensation reaction which initiates fatty acid synthesis and may therefore play a role in governing the total rate of fatty acid production. Possesses both acetoacetyl-ACP synthase and acetyl transacylase activities. Its substrate specificity determines the biosynthesis of branched-chain and/or straight-chain of fatty acids. This is Beta-ketoacyl-[acyl-carrier-protein] synthase III from Actinobacillus succinogenes (strain ATCC 55618 / DSM 22257 / CCUG 43843 / 130Z).